A 64-amino-acid chain; its full sequence is Large ribosomal subunit protein bL32 (64 aa).

Positions 1–64 are disordered; sequence MAVQQNRKTR…APKHGDETEE (64 aa). Residues 7-16 show a composition bias toward basic residues; that stretch reads RKTRSKRGMR.

It belongs to the bacterial ribosomal protein bL32 family.

The sequence is that of Large ribosomal subunit protein bL32 from Methylococcus capsulatus (strain ATCC 33009 / NCIMB 11132 / Bath).